The chain runs to 570 residues: Hydroxylamine reductase (570 aa).

[4Fe-4S] cluster is bound by residues C5, C8, C17, and C23. Hybrid [4Fe-2O-2S] cluster is bound by residues H266, E290, C334, C425, C453, C478, E513, and K515. Cysteine persulfide is present on C425.

The protein belongs to the HCP family. It depends on [4Fe-4S] cluster as a cofactor. Requires hybrid [4Fe-2O-2S] cluster as cofactor.

Its subcellular location is the cytoplasm. It catalyses the reaction A + NH4(+) + H2O = hydroxylamine + AH2 + H(+). In terms of biological role, catalyzes the reduction of hydroxylamine to form NH(3) and H(2)O. This chain is Hydroxylamine reductase, found in Clostridium botulinum (strain ATCC 19397 / Type A).